The primary structure comprises 371 residues: RxLR effector protein PITG_12731 (371 aa).

Residues 1-24 (MRFYSVLLTIVTLIASTYDAKVNA) form the signal peptide. The RxLR-dEER signature appears at 43 to 53 (RMLRADHADER).

This sequence belongs to the RxLR effector family.

Its subcellular location is the secreted. The protein localises to the host nucleus. It is found in the host cytoplasm. Its function is as follows. Effector that enhances P.infestans colonization of Nicotiana benthamiana leaves. This is RxLR effector protein PITG_12731 from Phytophthora infestans (strain T30-4) (Potato late blight agent).